We begin with the raw amino-acid sequence, 562 residues long: MKLRGDAREVYKRLLSRLESMIKLGEARTFLKKFEPTSDREEIIKRQNYLKEGLKNVRDDLEEYLLSIRPIRFRREFFHDRILLVSDEEVEEAEKLDLCPVTSDPSEIEDYPLILSTIGYGIEVEVKPSHIAPELYIIPLWENRDVLEALSKVFPGGAADKILISLKEIEEIFKKMEILENLDEIIVEKEKELNRKIEEKLERFKLTLSGRDLVEFMKALRAGNLEYLFHKFSALNDEIIEEINKAEKEISDVLGISVEIFPRDFPVEVPPEQIEALKRELEREFKIEFYLKSRETVEKILPHLQKLKEEIQKAYELYFLLVVKKFTRDFVFPEIVEEGIGFIEGRNLFIENPQPVSYFVGKSYGNFPGVEEANIVILTGANSGGKTSLLELISQIVILAHMGFPVPAKKAWFTVLDEIFFFKRKRSVYGAGAFETSLKGLVRAIKGKGKKLILIDEFESITEPGAAAKILAELLKIAYEKGFFVVIVSHLGEDLKREIPFARVDGIEAKGLDENLNLIVDRQPKFGVIGRSTPELIVERLARKGRGEEKMIMNRILKKFRK.

380–387 (GANSGGKT) provides a ligand contact to ATP.

This sequence belongs to the DNA mismatch repair MutS family. Archaeal Muts2 subfamily. In terms of assembly, multimer. The cofactor is Co(2+). It depends on Mn(2+) as a cofactor.

Its function is as follows. Has ATPase and non-specific DNA-binding activities. May be involved in recombination and/or recombinational repair. Not involved in mismatch repair. This Pyrococcus furiosus (strain ATCC 43587 / DSM 3638 / JCM 8422 / Vc1) protein is DNA-binding protein MutS2.